The following is a 100-amino-acid chain: Urease subunit gamma (100 aa).

The protein belongs to the urease gamma subunit family. In terms of assembly, heterotrimer of UreA (gamma), UreB (beta) and UreC (alpha) subunits. Three heterotrimers associate to form the active enzyme.

The protein resides in the cytoplasm. It carries out the reaction urea + 2 H2O + H(+) = hydrogencarbonate + 2 NH4(+). It functions in the pathway nitrogen metabolism; urea degradation; CO(2) and NH(3) from urea (urease route): step 1/1. The chain is Urease subunit gamma from Enterobacter sp. (strain 638).